The following is a 156-amino-acid chain: S-ribosylhomocysteine lyase (156 aa).

Fe cation-binding residues include His56, His60, and Cys123.

Belongs to the LuxS family. As to quaternary structure, homodimer. The cofactor is Fe cation.

The enzyme catalyses S-(5-deoxy-D-ribos-5-yl)-L-homocysteine = (S)-4,5-dihydroxypentane-2,3-dione + L-homocysteine. Involved in the synthesis of autoinducer 2 (AI-2) which is secreted by bacteria and is used to communicate both the cell density and the metabolic potential of the environment. The regulation of gene expression in response to changes in cell density is called quorum sensing. Catalyzes the transformation of S-ribosylhomocysteine (RHC) to homocysteine (HC) and 4,5-dihydroxy-2,3-pentadione (DPD). The chain is S-ribosylhomocysteine lyase from Staphylococcus epidermidis (strain ATCC 35984 / DSM 28319 / BCRC 17069 / CCUG 31568 / BM 3577 / RP62A).